Reading from the N-terminus, the 941-residue chain is Ankyrin repeat and MYND domain-containing protein 1 (941 aa).

MORN repeat units follow at residues 2-24 (YQGEFGLNMKLGYGKFSWPTGES), 25-47 (YHGQFYRDHCHGLGTYMWPDGSS), and 70-92 (FQGLYKADQRFGPGVETYPDGSQ). 7 ANK repeats span residues 292–321 (KGYTVLAAAATHCHNDIVNLLLDCGADVNK), 513–542 (MRRMALSMIERRKRWRTIKLLLRRGADPNL), 545–574 (VPMQVLFLAVKAGDVDGVRLLLEHGARTDI), 581–613 (STLTPLHIAAALPGEEGVQIVELLLHAITDVDA), 657–691 (GGRTALHMACEREDDNKCARDIVRLLLSHGANPNL), 694–723 (SGHSPLSLSIASGNELVVKELLTQGADPNL), and 737–766 (CDLTYEHQRNMDSKLALIDRLISHGADILK). Residues Cys880, Cys883, Cys894, Cys897, Cys903, Cys907, His916, and Cys920 each contribute to the Zn(2+) site. The segment at 880–920 (CYQCGRSIGVRLLPCPRCYGILTCSKYCKTKAWTEFHKKDC) adopts an MYND-type zinc-finger fold.

The protein is Ankyrin repeat and MYND domain-containing protein 1 (ANKMY1) of Homo sapiens (Human).